Here is a 1193-residue protein sequence, read N- to C-terminus: Cysteine protease ATG4 (1193 aa).

Disordered regions lie at residues 23 to 284 (AAIA…NKMS) and 358 to 474 (WRPI…KKKS). Positions 35 to 49 (NLPPPPPPDRIPPPK) are enriched in pro residues. A compositionally biased stretch (basic residues) spans 50–59 (GRSHQQKFKI). Basic and acidic residues-rich tracts occupy residues 60–72 (LRKE…RQPI), 117–127 (ANREEKKEKTS), and 140–153 (FGRD…KPEE). A compositionally biased stretch (low complexity) spans 170–185 (SSSTSTDSTTSRSITS). Residues 186 to 205 (AFTRQNSIQSRRSPRTSFGQ) are compositionally biased toward polar residues. A compositionally biased stretch (low complexity) spans 227 to 238 (SSTTSHDPSSDP). Composition is skewed to polar residues over residues 253 to 262 (QGASMSSLSR), 270 to 284 (GGTS…NKMS), and 389 to 447 (LSMN…STLS). Cys570 serves as the catalytic Nucleophile. Catalysis depends on residues Asp789 and His791. Disordered stretches follow at residues 807-869 (HSAK…SKYK), 899-924 (VPKS…TSTA), and 1000-1171 (QDEM…PARN). Over residues 835–846 (RTPETPRSTTPS) the composition is skewed to low complexity. Acidic residues-rich tracts occupy residues 1004 to 1029 (PSWE…EFEE) and 1070 to 1084 (HLDV…DDNE). 2 stretches are compositionally biased toward basic and acidic residues: residues 1097–1112 (IARH…KREQ) and 1152–1164 (PRYE…EQER).

Belongs to the peptidase C54 family.

The protein resides in the cytoplasm. The protein localises to the nucleus. It is found in the preautophagosomal structure. The enzyme catalyses [protein]-C-terminal L-amino acid-glycyl-phosphatidylethanolamide + H2O = [protein]-C-terminal L-amino acid-glycine + a 1,2-diacyl-sn-glycero-3-phosphoethanolamine. Its function is as follows. Cysteine protease that plays a key role in cytoplasm to vacuole transport (Cvt) and autophagy by mediating both proteolytic activation and delipidation of ATG8. Required for selective autophagic degradation of the nucleus (nucleophagy) as well as for mitophagy which contributes to regulate mitochondrial quantity and quality by eliminating the mitochondria to a basal level to fulfill cellular energy requirements and preventing excess ROS production. The protease activity is required for proteolytic activation of ATG8: cleaves the C-terminal amino acid of ATG8 to reveal a C-terminal glycine. ATG8 ubiquitin-like activity requires the exposure of the glycine at the C-terminus for its conjugation to phosphatidylethanolamine (PE) and its insertion to membranes, which is necessary for autophagy. The ATG8-PE conjugate mediates tethering between adjacent membranes and stimulates membrane hemifusion, leading to expansion of the autophagosomal membrane during autophagy. In addition to the protease activity, also catalyzes deconjugation of PE-conjugated forms of ATG8 during macroautophagy: ATG8 delipidation is required to release the protein from membranes, which facilitates multiple events during macroautophagy, and especially for efficient autophagosome biogenesis, the assembly of ATG9-containing tubulovesicular clusters into phagophores/autophagosomes, and for the disassembly of PAS-associated ATG components. ATG8 delipidation by ATG4 also recycles ATG8-PE generated on inappropriate membranes to maintain a reservoir of unlipidated ATG8 that is required for autophagosome formation at the PAS. This chain is Cysteine protease ATG4 (ATG4), found in Cryptococcus neoformans var. neoformans serotype D (strain JEC21 / ATCC MYA-565) (Filobasidiella neoformans).